We begin with the raw amino-acid sequence, 259 residues long: Leucyl/phenylalanyl-tRNA--protein transferase (259 aa).

The protein belongs to the L/F-transferase family.

It is found in the cytoplasm. It catalyses the reaction N-terminal L-lysyl-[protein] + L-leucyl-tRNA(Leu) = N-terminal L-leucyl-L-lysyl-[protein] + tRNA(Leu) + H(+). It carries out the reaction N-terminal L-arginyl-[protein] + L-leucyl-tRNA(Leu) = N-terminal L-leucyl-L-arginyl-[protein] + tRNA(Leu) + H(+). The enzyme catalyses L-phenylalanyl-tRNA(Phe) + an N-terminal L-alpha-aminoacyl-[protein] = an N-terminal L-phenylalanyl-L-alpha-aminoacyl-[protein] + tRNA(Phe). Functionally, functions in the N-end rule pathway of protein degradation where it conjugates Leu, Phe and, less efficiently, Met from aminoacyl-tRNAs to the N-termini of proteins containing an N-terminal arginine or lysine. This is Leucyl/phenylalanyl-tRNA--protein transferase from Teredinibacter turnerae (strain ATCC 39867 / T7901).